The primary structure comprises 332 residues: 2,3-diketo-L-gulonate reductase (332 aa).

The active-site Proton donor is His-44. NAD(+) contacts are provided by residues 168–174 (ITMVDMS), 224–225 (WK), and 304–306 (GHE).

Belongs to the LDH2/MDH2 oxidoreductase family. DlgD subfamily. As to quaternary structure, homodimer.

It localises to the cytoplasm. The enzyme catalyses 3-dehydro-L-gulonate + NAD(+) = 2,3-dioxo-L-gulonate + NADH + H(+). It catalyses the reaction 3-dehydro-L-gulonate + NADP(+) = 2,3-dioxo-L-gulonate + NADPH + H(+). In terms of biological role, catalyzes the reduction of 2,3-diketo-L-gulonate in the presence of NADH, to form 3-keto-L-gulonate. This chain is 2,3-diketo-L-gulonate reductase, found in Escherichia coli O17:K52:H18 (strain UMN026 / ExPEC).